Here is a 281-residue protein sequence, read N- to C-terminus: Pantothenate synthetase (281 aa).

30–37 (MGNLHQGH) lines the ATP pocket. The active-site Proton donor is His-37. Gln-61 lines the (R)-pantoate pocket. Position 61 (Gln-61) interacts with beta-alanine. Position 149–152 (149–152 (GNKD)) interacts with ATP. Gln-155 is a binding site for (R)-pantoate. Residues Ile-178 and 186-189 (MSSR) contribute to the ATP site.

Belongs to the pantothenate synthetase family. As to quaternary structure, homodimer.

It is found in the cytoplasm. The enzyme catalyses (R)-pantoate + beta-alanine + ATP = (R)-pantothenate + AMP + diphosphate + H(+). The protein operates within cofactor biosynthesis; (R)-pantothenate biosynthesis; (R)-pantothenate from (R)-pantoate and beta-alanine: step 1/1. Catalyzes the condensation of pantoate with beta-alanine in an ATP-dependent reaction via a pantoyl-adenylate intermediate. The protein is Pantothenate synthetase of Shewanella baltica (strain OS155 / ATCC BAA-1091).